A 148-amino-acid chain; its full sequence is Lysozyme C (148 aa).

The N-terminal stretch at 1 to 18 (MKALIILGLVLLSVTVQG) is a signal peptide. The C-type lysozyme domain occupies 19–148 (KIFERCELAR…VSQYVKGCGV (130 aa)). Cystine bridges form between Cys-24-Cys-146, Cys-48-Cys-134, Cys-83-Cys-99, and Cys-95-Cys-113. Active-site residues include Glu-53 and Asp-71.

This sequence belongs to the glycosyl hydrolase 22 family. As to quaternary structure, monomer.

Its subcellular location is the secreted. It catalyses the reaction Hydrolysis of (1-&gt;4)-beta-linkages between N-acetylmuramic acid and N-acetyl-D-glucosamine residues in a peptidoglycan and between N-acetyl-D-glucosamine residues in chitodextrins.. Functionally, lysozymes have primarily a bacteriolytic function; those in tissues and body fluids are associated with the monocyte-macrophage system and enhance the activity of immunoagents. The sequence is that of Lysozyme C (LYZ) from Pygathrix nemaeus (Red-shanked douc langur).